We begin with the raw amino-acid sequence, 116 residues long: Tyrosine-protein phosphatase 10 (116 aa).

One can recognise a Tyrosine-protein phosphatase domain in the interval 1-116 (WRMVWEQNVS…SPTGYGPIVV (116 aa)). Aspartate 86 contributes to the substrate binding site.

The protein belongs to the protein-tyrosine phosphatase family.

It catalyses the reaction O-phospho-L-tyrosyl-[protein] + H2O = L-tyrosyl-[protein] + phosphate. This is Tyrosine-protein phosphatase 10 (STY-10) from Styela plicata (Wrinkled sea squirt).